We begin with the raw amino-acid sequence, 438 residues long: Aspartyl protease 25 (438 aa).

A signal peptide spans 1–23 (MAATTTIPLLLLLLAATVAAAAA). A Peptidase A1 domain is found at 79–433 (YVVRAGLGSP…DVANSRVGFA (355 aa)). The active site involves Asp97. A disulfide bond links Cys107 and Cys113. N-linked (GlcNAc...) asparagine glycans are attached at residues Asn123, Asn193, and Asn282. Asp313 is a catalytic residue. Residues Cys352 and Cys394 are joined by a disulfide bond.

The protein belongs to the peptidase A1 family.

In terms of biological role, anther-specific aspartic protease involved in tapetal programmed cell death (PCD). Directly regulated by the transcription factor EAT1/DTD in anthers during tapetum PCD and degeneration. The chain is Aspartyl protease 25 from Oryza sativa subsp. japonica (Rice).